Reading from the N-terminus, the 121-residue chain is Holo-[acyl-carrier-protein] synthase (121 aa).

Asp8 and Glu58 together coordinate Mg(2+).

It belongs to the P-Pant transferase superfamily. AcpS family. It depends on Mg(2+) as a cofactor.

The protein localises to the cytoplasm. It carries out the reaction apo-[ACP] + CoA = holo-[ACP] + adenosine 3',5'-bisphosphate + H(+). Its function is as follows. Transfers the 4'-phosphopantetheine moiety from coenzyme A to a Ser of acyl-carrier-protein. This Bacillus velezensis (strain DSM 23117 / BGSC 10A6 / LMG 26770 / FZB42) (Bacillus amyloliquefaciens subsp. plantarum) protein is Holo-[acyl-carrier-protein] synthase.